The following is a 106-amino-acid chain: Immunoglobulin lambda constant 1 (106 aa).

The Ig-like domain maps to proline 7 to alanine 101. A disulfide bond links cysteine 28 and cysteine 87.

In terms of assembly, immunoglobulins are composed of two identical heavy chains and two identical light chains; disulfide-linked.

Its subcellular location is the secreted. The protein localises to the cell membrane. Functionally, constant region of immunoglobulin light chains. Immunoglobulins, also known as antibodies, are membrane-bound or secreted glycoproteins produced by B lymphocytes. In the recognition phase of humoral immunity, the membrane-bound immunoglobulins serve as receptors which, upon binding of a specific antigen, trigger the clonal expansion and differentiation of B lymphocytes into immunoglobulins-secreting plasma cells. Secreted immunoglobulins mediate the effector phase of humoral immunity, which results in the elimination of bound antigens. The antigen binding site is formed by the variable domain of one heavy chain, together with that of its associated light chain. Thus, each immunoglobulin has two antigen binding sites with remarkable affinity for a particular antigen. The variable domains are assembled by a process called V-(D)-J rearrangement and can then be subjected to somatic hypermutations which, after exposure to antigen and selection, allow affinity maturation for a particular antigen. The polypeptide is Immunoglobulin lambda constant 1 (Homo sapiens (Human)).